The primary structure comprises 361 residues: MTGAPDSTTPQAASVSTEGARAATLHVPVLLDEVLEALAPRPGGRYLDGTVGLGGHSAAIMERIGPDGELCCLDRDTTALGLARQRLAPWGGRVHFFHTRYADFEAALDQLGWDKVDGALIDIGVSSMQIDMADRGFSFHADGPLDMRMDRDGDEAPASRLVNRATVDVLKDIILRYGEDPMAGRIARAIVDARAAGPIETTAQLAAIVDRAYPAKWRATSRNHPATRTFQALRMAVNDELGQLERFLDRILDRLNPGGRLAVITFHSLEDRIVKHRLRDESQGCVCPRSVSRCECGHKARVDVLTRKPVTATDAELARNSRASSAKLRAAQRLAEGQAPRPRRRNKYAPEGRDEPEGGAA.

S-adenosyl-L-methionine contacts are provided by residues 54–56 (GGH), Asp74, Tyr101, Asp122, and Gln129. Residues 318–361 (ARNSRASSAKLRAAQRLAEGQAPRPRRRNKYAPEGRDEPEGGAA) are disordered. Positions 348–361 (YAPEGRDEPEGGAA) are enriched in basic and acidic residues.

This sequence belongs to the methyltransferase superfamily. RsmH family.

Its subcellular location is the cytoplasm. The catalysed reaction is cytidine(1402) in 16S rRNA + S-adenosyl-L-methionine = N(4)-methylcytidine(1402) in 16S rRNA + S-adenosyl-L-homocysteine + H(+). Functionally, specifically methylates the N4 position of cytidine in position 1402 (C1402) of 16S rRNA. In Nitratidesulfovibrio vulgaris (strain DSM 19637 / Miyazaki F) (Desulfovibrio vulgaris), this protein is Ribosomal RNA small subunit methyltransferase H.